Consider the following 749-residue polypeptide: Soluble starch synthase 2-1, chloroplastic/amyloplastic (749 aa).

Residues 1-44 (MAAAAVSSLLAPSGSCYSPGCHSCWGPGPGGGRRLPSPRRRPIT) constitute a chloroplast transit peptide. K272 is a binding site for ADP-alpha-D-glucose.

This sequence belongs to the glycosyltransferase 1 family. Bacterial/plant glycogen synthase subfamily. As to expression, expressed in endosperm, leaves, and weakly in roots.

The protein resides in the plastid. Its subcellular location is the amyloplast. It is found in the chloroplast. The enzyme catalyses [(1-&gt;4)-alpha-D-glucosyl](n) + ADP-alpha-D-glucose = [(1-&gt;4)-alpha-D-glucosyl](n+1) + ADP + H(+). It participates in glycan biosynthesis; starch biosynthesis. Its function is as follows. May be involved in starch synthesis in endosperm amyloplasts and contribute to the deposition of transient starch in chloroplasts of leaves. This Oryza sativa subsp. japonica (Rice) protein is Soluble starch synthase 2-1, chloroplastic/amyloplastic (SSII-1).